Consider the following 169-residue polypeptide: U3 small nucleolar ribonucleoprotein protein imp3 (169 aa).

One can recognise an S4 RNA-binding domain in the interval 109 to 166 (RRLPVVMCRLKMCETVSTSVKYVEHGHVRVGPEVITDPAFFVTRNMEDFVTWVDSSKI).

It belongs to the universal ribosomal protein uS4 family. As to quaternary structure, component of a heterotrimeric complex containing imp3, imp4 and mpp10.

The protein resides in the nucleus. It localises to the nucleolus. Functionally, component of the U3 small nucleolar ribonucleoprotein. Required for the early cleavages at sites A0, A1 and A2 during 18S ribosomal pre-RNA processing. This is U3 small nucleolar ribonucleoprotein protein imp3 (RBP) from Pneumocystis carinii.